The primary structure comprises 234 residues: Heme-copper oxidase subunit 2 (234 aa).

The next 2 membrane-spanning stretches (helical) occupy residues 13–33 and 72–92; these read LFLLFTAVGVLAAGTVTAFFI and LLFVTGIIVMGLIVATIDETL. 4 residues coordinate Cu cation: H151, C188, C192, and H196.

Belongs to the cytochrome c oxidase subunit 2 family.

It is found in the cell membrane. This Aeropyrum pernix (strain ATCC 700893 / DSM 11879 / JCM 9820 / NBRC 100138 / K1) protein is Heme-copper oxidase subunit 2 (aoxA).